The following is a 392-amino-acid chain: Bifunctional enzyme Fae/Hps (392 aa).

Residues 1 to 161 (MFQIGEALMG…EESNKSTHAI (161 aa)) form a formaldehyde-activating enzyme region. H17 (proton donor) is an active-site residue. D19, L48, K66, T68, and Q83 together coordinate substrate. Positions 162 to 392 (MGFKVTRLWD…IDQFRVMTDF (231 aa)) are 3-hexulose-6-phosphate synthase.

It in the N-terminal section; belongs to the formaldehyde-activating enzyme family. In the C-terminal section; belongs to the HPS/KGPDC family. HPS subfamily.

It carries out the reaction 5,6,7,8-tetrahydromethanopterin + formaldehyde = 5,10-methylenetetrahydromethanopterin + H2O. The catalysed reaction is D-ribulose 5-phosphate + formaldehyde = D-arabino-hex-3-ulose 6-phosphate. It functions in the pathway carbohydrate biosynthesis; D-ribose 5-phosphate biosynthesis. Catalyzes the condensation of formaldehyde with tetrahydromethanopterin (H(4)MPT) to 5,10-methylenetetrahydromethanopterin. Functionally, catalyzes the reversible formation of ribulose-5-phosphate and formaldehyde from 3-hexulose-6-phosphate. This Methanosarcina acetivorans (strain ATCC 35395 / DSM 2834 / JCM 12185 / C2A) protein is Bifunctional enzyme Fae/Hps.